We begin with the raw amino-acid sequence, 355 residues long: Protein RecA (355 aa).

72-79 (GPESSGKT) contacts ATP.

The protein belongs to the RecA family.

The protein resides in the cytoplasm. Its function is as follows. Can catalyze the hydrolysis of ATP in the presence of single-stranded DNA, the ATP-dependent uptake of single-stranded DNA by duplex DNA, and the ATP-dependent hybridization of homologous single-stranded DNAs. It interacts with LexA causing its activation and leading to its autocatalytic cleavage. This Thermosynechococcus vestitus (strain NIES-2133 / IAM M-273 / BP-1) protein is Protein RecA.